The sequence spans 302 residues: Gamma-gliadin (302 aa).

Positions 1 to 19 (MKTLLILTILAMATTIATA) are cleaved as a signal peptide. Positions 27-159 (GQVQWPQQQP…QSFPQQQQPA (133 aa)) are disordered. Low complexity predominate over residues 42–102 (QPFCQQPQRT…PQPQQTFPQQ (61 aa)). Residues 103 to 124 (PQLPFPQQPQQPFPQPQQPQQP) show a composition bias toward pro residues. Residues 125 to 159 (FPQSQQPQQPFPQPQQQFPQPQQPQQSFPQQQQPA) are compositionally biased toward low complexity.

Belongs to the gliadin/glutenin family.

In terms of biological role, gliadin is the major seed storage protein in wheat. This Triticum aestivum (Wheat) protein is Gamma-gliadin.